The chain runs to 74 residues: ATP synthase subunit c (74 aa).

A run of 2 helical transmembrane segments spans residues 8 to 28 (FIGV…VSNI) and 52 to 72 (IGAG…MLLI).

This sequence belongs to the ATPase C chain family. In terms of assembly, F-type ATPases have 2 components, F(1) - the catalytic core - and F(0) - the membrane proton channel. F(1) has five subunits: alpha(3), beta(3), gamma(1), delta(1), epsilon(1). F(0) has three main subunits: a(1), b(2) and c(10-14). The alpha and beta chains form an alternating ring which encloses part of the gamma chain. F(1) is attached to F(0) by a central stalk formed by the gamma and epsilon chains, while a peripheral stalk is formed by the delta and b chains.

It is found in the cell inner membrane. F(1)F(0) ATP synthase produces ATP from ADP in the presence of a proton or sodium gradient. F-type ATPases consist of two structural domains, F(1) containing the extramembraneous catalytic core and F(0) containing the membrane proton channel, linked together by a central stalk and a peripheral stalk. During catalysis, ATP synthesis in the catalytic domain of F(1) is coupled via a rotary mechanism of the central stalk subunits to proton translocation. In terms of biological role, key component of the F(0) channel; it plays a direct role in translocation across the membrane. A homomeric c-ring of between 10-14 subunits forms the central stalk rotor element with the F(1) delta and epsilon subunits. This is ATP synthase subunit c from Rickettsia canadensis (strain McKiel).